Here is a 371-residue protein sequence, read N- to C-terminus: Deoxyhypusine synthase (371 aa).

Residues 112-116 (SNLVT), 138-140 (SAG), Glu-144, and Asp-245 contribute to the NAD(+) site. 143 to 144 (EE) contacts spermidine. Asp-250 contributes to the spermidine binding site. Gly-291 contributes to the NAD(+) binding site. His-296 lines the spermidine pocket. 316-317 (TG) provides a ligand contact to NAD(+). Spermidine-binding positions include 322–324 (GSD) and 331–337 (EAVSWGK). The active-site Nucleophile is the Lys-337. 350 to 351 (EA) contributes to the NAD(+) binding site.

The protein belongs to the deoxyhypusine synthase family. NAD(+) serves as cofactor.

The enzyme catalyses [eIF5A protein]-L-lysine + spermidine = [eIF5A protein]-deoxyhypusine + propane-1,3-diamine. It participates in protein modification; eIF5A hypusination. Its function is as follows. Catalyzes the NAD-dependent oxidative cleavage of spermidine and the subsequent transfer of the butylamine moiety of spermidine to the epsilon-amino group of a critical lysine residue of the eIF-5A precursor protein to form the intermediate deoxyhypusine residue. This is the first step of the post-translational modification of that lysine into an unusual amino acid residue named hypusine. Hypusination is unique to mature eIF-5A factor and is essential for its function. The protein is Deoxyhypusine synthase of Caenorhabditis elegans.